The following is a 52-amino-acid chain: uncharacterized protein (52 aa).

This is an uncharacterized protein from Treponema pallidum (strain Nichols).